The following is a 359-amino-acid chain: G-protein coupled receptor 15 (359 aa).

At 1-33 (MDPEETSVYLDYYYATSPNPDIRETHSHVPYTS) the chain is on the extracellular side. A helical transmembrane segment spans residues 34-54 (VFLPVFYTAVFLTGVLGNLVL). Residues 55–69 (MGALHFKPGSRRLID) are Cytoplasmic-facing. A helical membrane pass occupies residues 70-90 (IFIINLAASDFIFLVTLPLWV). At 91 to 120 (DKEASLGLWRTGSFLCKGSSYMISVNMHCS) the chain is on the extracellular side. A helical transmembrane segment spans residues 121–141 (VFLLTCMSVDRYLAIVCPVVS). The Cytoplasmic segment spans residues 142–149 (RKFRRTDC). A helical transmembrane segment spans residues 150-170 (AYVVCASIWFISCLLGLPTLL). Residues 171-192 (SRELTLIDDKPYCAEKKATPLK) lie on the Extracellular side of the membrane. A helical transmembrane segment spans residues 193–213 (LIWSLVALIFTFFVPLLNIVT). Topologically, residues 214 to 239 (CYCCIARKLCAHYQQSGRHNKKLKKS) are cytoplasmic. Residues 240–260 (IKIILIVVAAFLVSWLPFNTF) form a helical membrane-spanning segment. The Extracellular portion of the chain corresponds to 261–283 (KLLAIVSGLQERYFPSAMLQLGM). Residues 284-304 (EVSGPLAFANSCVNPFIYYIF) traverse the membrane as a helical segment. The Cytoplasmic segment spans residues 305–359 (DSYIRRAIVHCLCPCLKNYDFGSSTETSDSHLTKALSTFIHAEDFTRRRKRSVSL). A Phosphoserine modification is found at Ser358.

The protein belongs to the G-protein coupled receptor 1 family. Interacts with adapter YWHAE; this interaction promotes ER-to-Golgi transport of GPR15. Phosphorylation is necessary for YWHAE binding and efficient surface expression. Post-translationally, O-glycosylated. Sialylated O-glycans in the N-terminal tail inhibits binding of GPR15LG. In terms of processing, sulfation is required for efficient binding of GPR15LG.

It is found in the cell membrane. Functionally, g protein-coupled receptor that plays an important role in immune homeostasis. Acts via its natural ligand GPR15LG, a chemokine-like polypeptide strongly expressed in gastrointestinal tissues. GPR15-GPR15LG signaling axis regulates intestinal homeostasis and inflammation through the migration of immune cells. Controls thereby the specific homing of T-cells, particularly FOXP3+ regulatory T-cells (Tregs), to the large intestine lamina propria. Also required for skin localization of thymus-derived dendritic epidermal T-cells. Plays an important role in mediating cytoprotective function as well as angiogenesis of thrombomodulin. Mechanistically, preferentially signals through the Gi/o pathway to inhibit adenylate cyclase activity and activate a phosphatidylinositol-calcium second messenger system that regulates the release of Ca(2+) ions from intracellular stores. This is G-protein coupled receptor 15 (GPR15) from Macaca fascicularis (Crab-eating macaque).